A 270-amino-acid chain; its full sequence is ATP synthase subunit a (270 aa).

Transmembrane regions (helical) follow at residues 37 to 57 (NVHI…LWVF), 98 to 118 (IAPL…MDLV), 143 to 163 (DVNI…YYSI), 217 to 237 (VVFI…GALP), and 239 to 259 (AIFH…LTIV).

Belongs to the ATPase A chain family. As to quaternary structure, F-type ATPases have 2 components, CF(1) - the catalytic core - and CF(0) - the membrane proton channel. CF(1) has five subunits: alpha(3), beta(3), gamma(1), delta(1), epsilon(1). CF(0) has three main subunits: a(1), b(2) and c(9-12). The alpha and beta chains form an alternating ring which encloses part of the gamma chain. CF(1) is attached to CF(0) by a central stalk formed by the gamma and epsilon chains, while a peripheral stalk is formed by the delta and b chains.

It localises to the cell inner membrane. Its function is as follows. Key component of the proton channel; it plays a direct role in the translocation of protons across the membrane. The sequence is that of ATP synthase subunit a from Aliivibrio fischeri (strain ATCC 700601 / ES114) (Vibrio fischeri).